The sequence spans 126 residues: Large ribosomal subunit protein bL17 (126 aa).

This sequence belongs to the bacterial ribosomal protein bL17 family. Part of the 50S ribosomal subunit. Contacts protein L32.

In Lawsonia intracellularis (strain PHE/MN1-00), this protein is Large ribosomal subunit protein bL17.